Reading from the N-terminus, the 388-residue chain is Probable acetyl-CoA acetyltransferase (388 aa).

The active-site Acyl-thioester intermediate is Cys-84. Lys-187 participates in a covalent cross-link: Isoglutamyl lysine isopeptide (Lys-Gln) (interchain with Q-Cter in protein Pup). Residues His-345 and Cys-375 each act as proton acceptor in the active site.

This sequence belongs to the thiolase-like superfamily. Thiolase family.

It carries out the reaction 2 acetyl-CoA = acetoacetyl-CoA + CoA. In Mycolicibacterium smegmatis (strain ATCC 700084 / mc(2)155) (Mycobacterium smegmatis), this protein is Probable acetyl-CoA acetyltransferase.